We begin with the raw amino-acid sequence, 1074 residues long: Probable phospholipid-transporting ATPase tat-5 (1074 aa).

The tract at residues 1–26 (MGKRKKNDESSSSSSQKPCVSSSSDD) is disordered. Residues 10–26 (SSSSSSQKPCVSSSSDD) are compositionally biased toward low complexity. 4 consecutive transmembrane segments (helical) span residues 118-138 (FVPI…FLLM), 143-163 (FIPA…GFVL), 354-374 (LTKL…AMKG), and 378-398 (LWYR…PISL). Residue Asp-442 is the 4-aspartylphosphate intermediate of the active site. ATP is bound by residues Asp-442, Lys-443, Thr-444, Glu-524, Phe-570, Lys-575, Lys-594, Arg-623, Thr-624, Thr-704, Gly-705, Asp-706, Arg-786, and Lys-792. Asp-442 lines the Mg(2+) pocket. Thr-444 serves as a coordination point for Mg(2+). Asp-813 lines the Mg(2+) pocket. Positions 816 and 817 each coordinate ATP. Asp-817 serves as a coordination point for Mg(2+). Helical transmembrane passes span 886 to 906 (AIFS…VLMV), 954 to 974 (IWVL…LLVF), 978 to 998 (FIHV…IMVA), 1006 to 1026 (WAML…LILF), and 1038 to 1058 (WVFI…LYIV).

It belongs to the cation transport ATPase (P-type) (TC 3.A.3) family. Type IV subfamily. Mg(2+) is required as a cofactor.

The protein localises to the cell membrane. The enzyme catalyses ATP + H2O + phospholipidSide 1 = ADP + phosphate + phospholipidSide 2.. Functionally, plays a role in regulating membrane trafficking of cargo proteins during embryogenesis. Regulates snx-3 retromer-mediated endosomal sorting of mig-14, a transporter of Wnt egl-20 morphogen. Together with mon-2 and pad-1, may participate in the formation of endosomal carriers that direct mig-14 trafficking back to Golgi, away from lysosomal degradation. Required for Wnt egl-20 gradient formation along the anteroposterior body axis and migration of QL neuroblast descendants toward the posterior part. Maintains phosphatidylethanolamine (PE) asymmetry at the cell membrane and prevents the budding of ectosome vesicles that affect intercellular communication and morphogenesis. The protein is Probable phospholipid-transporting ATPase tat-5 (tat-5) of Caenorhabditis elegans.